Consider the following 513-residue polypeptide: Maturase K (513 aa).

It belongs to the intron maturase 2 family. MatK subfamily.

The protein resides in the plastid. It is found in the chloroplast. Functionally, usually encoded in the trnK tRNA gene intron. Probably assists in splicing its own and other chloroplast group II introns. The polypeptide is Maturase K (Molinia caerulea (Purple moor-grass)).